A 185-amino-acid chain; its full sequence is dCTP deaminase (185 aa).

Residues 107 to 112 (KSTYAR), 131 to 133 (TLE), Gln152, Tyr166, and Gln176 contribute to the dCTP site. The active-site Proton donor/acceptor is the Glu133.

Belongs to the dCTP deaminase family. In terms of assembly, homotrimer.

The catalysed reaction is dCTP + H2O + H(+) = dUTP + NH4(+). The protein operates within pyrimidine metabolism; dUMP biosynthesis; dUMP from dCTP (dUTP route): step 1/2. Functionally, catalyzes the deamination of dCTP to dUTP. The polypeptide is dCTP deaminase (Anaplasma phagocytophilum (strain HZ)).